The chain runs to 149 residues: Large ribosomal subunit protein bL9 (149 aa).

This sequence belongs to the bacterial ribosomal protein bL9 family.

Its function is as follows. Binds to the 23S rRNA. In Chromobacterium violaceum (strain ATCC 12472 / DSM 30191 / JCM 1249 / CCUG 213 / NBRC 12614 / NCIMB 9131 / NCTC 9757 / MK), this protein is Large ribosomal subunit protein bL9.